The sequence spans 360 residues: MTATLERRESASLWERFCSWITSTDNRLYIGWFGVLMIPTLLTATTVYIIAFIAAPPVDIDGIREPVAGSLLYGNNIITGAVIPSSASIGIHFYPIWEAASLDEWLYNGGPYQLIVDHFLLGVCGWIGREWEFSYRLGMRPWISVAFTAPVAAASAVFLVYPIGQGSFSDGMPLGISGTFNFMLVFQAEHNILMHPFHQLGVAGVFGGSLFSAMHGSLVTSSLIRETTENESANYGYKFGQEEETYNIVAAHGYFGRLIFQYASFNNSRALHFFLGLWPVVGIWFTALGIMTMAFNLNGFNFNQSVVDSQGRVINTWADILNRANLGMEVMHERNAHNFPLDLAAGESLPVALTAPAVNG.

The next 3 helical transmembrane spans lie at 29-46, 118-133, and 142-156; these read YIGWFGVLMIPTLLTATT, HFLLGVCGWIGREWEF, and WISVAFTAPVAAASA. Position 118 (His118) interacts with chlorophyll a. Pheophytin a is bound at residue Trp126. The [CaMn4O5] cluster site is built by Asp170 and Glu189. A helical membrane pass occupies residues 197–218; sequence FHQLGVAGVFGGSLFSAMHGSL. His198 serves as a coordination point for chlorophyll a. Residues His215 and 264-265 contribute to the a quinone site; that span reads SF. His215 contributes to the Fe cation binding site. His272 is a binding site for Fe cation. A helical membrane pass occupies residues 274–288; that stretch reads FLGLWPVVGIWFTAL. 4 residues coordinate [CaMn4O5] cluster: His332, Glu333, Asp342, and Ala344. A propeptide spanning residues 345–360 is cleaved from the precursor; that stretch reads AGESLPVALTAPAVNG.

This sequence belongs to the reaction center PufL/M/PsbA/D family. PSII is composed of 1 copy each of membrane proteins PsbA, PsbB, PsbC, PsbD, PsbE, PsbF, PsbH, PsbI, PsbJ, PsbK, PsbL, PsbM, PsbT, PsbX, PsbY, PsbZ, Psb30/Ycf12, at least 3 peripheral proteins of the oxygen-evolving complex and a large number of cofactors. It forms dimeric complexes. Requires The D1/D2 heterodimer binds P680, chlorophylls that are the primary electron donor of PSII, and subsequent electron acceptors. It shares a non-heme iron and each subunit binds pheophytin, quinone, additional chlorophylls, carotenoids and lipids. D1 provides most of the ligands for the Mn4-Ca-O5 cluster of the oxygen-evolving complex (OEC). There is also a Cl(-1) ion associated with D1 and D2, which is required for oxygen evolution. The PSII complex binds additional chlorophylls, carotenoids and specific lipids. as cofactor. In terms of processing, tyr-161 forms a radical intermediate that is referred to as redox-active TyrZ, YZ or Y-Z. Post-translationally, C-terminally processed by CTPA; processing is essential to allow assembly of the oxygen-evolving complex and thus photosynthetic growth.

The protein resides in the plastid. It is found in the chloroplast thylakoid membrane. The enzyme catalyses 2 a plastoquinone + 4 hnu + 2 H2O = 2 a plastoquinol + O2. Photosystem II (PSII) is a light-driven water:plastoquinone oxidoreductase that uses light energy to abstract electrons from H(2)O, generating O(2) and a proton gradient subsequently used for ATP formation. It consists of a core antenna complex that captures photons, and an electron transfer chain that converts photonic excitation into a charge separation. The D1/D2 (PsbA/PsbD) reaction center heterodimer binds P680, the primary electron donor of PSII as well as several subsequent electron acceptors. This chain is Photosystem II protein D1, found in Rhodomonas salina (Cryptomonas salina).